The sequence spans 336 residues: Holliday junction branch migration complex subunit RuvB (336 aa).

The segment at 2–186 (QDQEEERMIT…FGVICKLELY (185 aa)) is large ATPase domain (RuvB-L). Residues Leu25, Arg26, Gly67, Lys70, Thr71, Thr72, 133–135 (EDF), Arg176, Tyr186, and Arg223 contribute to the ATP site. Thr71 serves as a coordination point for Mg(2+). The segment at 187–257 (NNKQLTAIVK…VAEEALILLE (71 aa)) is small ATPAse domain (RuvB-S). The segment at 260 to 336 (SLGLDNTDKK…YEHFNIPSAE (77 aa)) is head domain (RuvB-H). Positions 296, 315, and 320 each coordinate DNA.

It belongs to the RuvB family. As to quaternary structure, homohexamer. Forms an RuvA(8)-RuvB(12)-Holliday junction (HJ) complex. HJ DNA is sandwiched between 2 RuvA tetramers; dsDNA enters through RuvA and exits via RuvB. An RuvB hexamer assembles on each DNA strand where it exits the tetramer. Each RuvB hexamer is contacted by two RuvA subunits (via domain III) on 2 adjacent RuvB subunits; this complex drives branch migration. In the full resolvosome a probable DNA-RuvA(4)-RuvB(12)-RuvC(2) complex forms which resolves the HJ.

It is found in the cytoplasm. The enzyme catalyses ATP + H2O = ADP + phosphate + H(+). In terms of biological role, the RuvA-RuvB-RuvC complex processes Holliday junction (HJ) DNA during genetic recombination and DNA repair, while the RuvA-RuvB complex plays an important role in the rescue of blocked DNA replication forks via replication fork reversal (RFR). RuvA specifically binds to HJ cruciform DNA, conferring on it an open structure. The RuvB hexamer acts as an ATP-dependent pump, pulling dsDNA into and through the RuvAB complex. RuvB forms 2 homohexamers on either side of HJ DNA bound by 1 or 2 RuvA tetramers; 4 subunits per hexamer contact DNA at a time. Coordinated motions by a converter formed by DNA-disengaged RuvB subunits stimulates ATP hydrolysis and nucleotide exchange. Immobilization of the converter enables RuvB to convert the ATP-contained energy into a lever motion, pulling 2 nucleotides of DNA out of the RuvA tetramer per ATP hydrolyzed, thus driving DNA branch migration. The RuvB motors rotate together with the DNA substrate, which together with the progressing nucleotide cycle form the mechanistic basis for DNA recombination by continuous HJ branch migration. Branch migration allows RuvC to scan DNA until it finds its consensus sequence, where it cleaves and resolves cruciform DNA. This Alkaliphilus metalliredigens (strain QYMF) protein is Holliday junction branch migration complex subunit RuvB.